A 1099-amino-acid polypeptide reads, in one-letter code: Probable inorganic carbon transporter subunit DabA (1099 aa).

Residues 175-194 are disordered; sequence RQGRRRFATTERRTRRTRRS. Residues 176 to 194 show a composition bias toward basic residues; it reads QGRRRFATTERRTRRTRRS. 4 residues coordinate Zn(2+): Cys-514, Asp-516, His-722, and Cys-737. The tract at residues 1071 to 1099 is disordered; the sequence is AGAGAAQPTRDAIELPEQASGPLPARDGQ.

This sequence belongs to the inorganic carbon transporter (TC 9.A.2) DabA family. As to quaternary structure, forms a complex with DabB. It depends on Zn(2+) as a cofactor.

It is found in the cell membrane. Its function is as follows. Part of an energy-coupled inorganic carbon pump. In Parafrankia sp. (strain EAN1pec), this protein is Probable inorganic carbon transporter subunit DabA.